Reading from the N-terminus, the 151-residue chain is UPF0756 membrane protein Aflv_0503 (151 aa).

The next 4 helical transmembrane spans lie at phenylalanine 4–isoleucine 24, leucine 52–phenylalanine 72, tryptophan 85–leucine 105, and leucine 115–isoleucine 135.

This sequence belongs to the UPF0756 family.

Its subcellular location is the cell membrane. The sequence is that of UPF0756 membrane protein Aflv_0503 from Anoxybacillus flavithermus (strain DSM 21510 / WK1).